Here is a 498-residue protein sequence, read N- to C-terminus: Flagellin (498 aa).

Belongs to the bacterial flagellin family.

The protein resides in the secreted. It is found in the bacterial flagellum. Flagellin is the subunit protein which polymerizes to form the filaments of bacterial flagella. The chain is Flagellin (fliC) from Escherichia coli (strain K12).